A 221-amino-acid polypeptide reads, in one-letter code: Interleukin-12 subunit alpha (221 aa).

A signal peptide spans 1 to 25 (MCPLRSLLLISTLVLLHHLPHLSLG). 3 disulfide bridges follow: cysteine 39-cysteine 112, cysteine 66-cysteine 198, and cysteine 87-cysteine 125. An N-linked (GlcNAc...) asparagine glycan is attached at asparagine 95.

Belongs to the IL-6 superfamily. Heterodimer with IL12B; disulfide-linked. This heterodimer is known as interleukin IL-12. Heterodimer with EBI3/IL27B; not disulfide-linked. This heterodimer is known as interleukin IL-35. Interacts with NBR1; this interaction promotes IL-12 secretion.

The protein localises to the secreted. Its function is as follows. Heterodimerizes with IL12B to form the IL-12 cytokine or with EBI3/IL27B to form the IL-35 cytokine. IL-12 is primarily produced by professional antigen-presenting cells (APCs) such as B-cells and dendritic cells (DCs) as well as macrophages and granulocytes and regulates T-cell and natural killer-cell responses, induces the production of interferon-gamma (IFN-gamma), favors the differentiation of T-helper 1 (Th1) cells and is an important link between innate resistance and adaptive immunity. Mechanistically, exerts its biological effects through a receptor composed of IL12R1 and IL12R2 subunits. Binding to the receptor results in the rapid tyrosine phosphorylation of a number of cellular substrates including the JAK family kinases TYK2 and JAK2. In turn, recruited STAT4 gets phosphorylated and translocates to the nucleus where it regulates cytokine/growth factor responsive genes. As part of IL-35, plays essential roles in maintaining the immune homeostasis of the liver microenvironment and also functions as an immune-suppressive cytokine. Mediates biological events through unconventional receptors composed of IL12RB2 and gp130/IL6ST heterodimers or homodimers. Signaling requires the transcription factors STAT1 and STAT4, which form a unique heterodimer that binds to distinct DNA sites. In Capra hircus (Goat), this protein is Interleukin-12 subunit alpha (IL12A).